Consider the following 539-residue polypeptide: O-phosphoserine--tRNA(Cys) ligase (539 aa).

Residues 188 to 190 (HMT), 233 to 235 (SAS), 275 to 276 (YY), and Asn-319 each bind substrate.

The protein belongs to the class-II aminoacyl-tRNA synthetase family. O-phosphoseryl-tRNA(Cys) synthetase subfamily. As to quaternary structure, homotetramer. Interacts with SepCysS.

It carries out the reaction tRNA(Cys) + O-phospho-L-serine + ATP = O-phospho-L-seryl-tRNA(Cys) + AMP + diphosphate. Its function is as follows. Catalyzes the attachment of O-phosphoserine (Sep) to tRNA(Cys). The polypeptide is O-phosphoserine--tRNA(Cys) ligase (sepS) (Methanocaldococcus jannaschii (strain ATCC 43067 / DSM 2661 / JAL-1 / JCM 10045 / NBRC 100440) (Methanococcus jannaschii)).